Reading from the N-terminus, the 519-residue chain is Serine/threonine-protein kinase RIO3 (519 aa).

Serine 8 and serine 112 each carry phosphoserine. The interval 121–159 is disordered; sequence PYEDSDSSEDEVDWQDTRDDPYRPAKPVPTPKKGFIGKG. Tyrosine 122 is subject to Phosphotyrosine. A compositionally biased stretch (acidic residues) spans 124 to 134; it reads DSDSSEDEVDW. 3 positions are modified to phosphoserine: serine 125, serine 127, and serine 128. The region spanning 251–519 is the Protein kinase domain; the sequence is ETITGCISTG…DGDPPLLYDE (269 aa). ATP is bound by residues 257 to 265 and lysine 290; that span reads ISTGKESVV. Catalysis depends on aspartate 406, which acts as the Proton acceptor.

This sequence belongs to the protein kinase superfamily. RIO-type Ser/Thr kinase family. In terms of assembly, interacts with CASP10. Interacts with IRF3; RIOK3 probably mediates the interaction of TBK1 with IRF3. Associated with 40S pre-ribosomal particles. Mg(2+) is required as a cofactor. Autophosphorylated (in vitro). As to expression, widely expressed.

It is found in the cytoplasm. The catalysed reaction is L-seryl-[protein] + ATP = O-phospho-L-seryl-[protein] + ADP + H(+). The enzyme catalyses L-threonyl-[protein] + ATP = O-phospho-L-threonyl-[protein] + ADP + H(+). Its function is as follows. Involved in regulation of type I interferon (IFN)-dependent immune response which plays a critical role in the innate immune response against DNA and RNA viruses. May act as an adapter protein essential for the recruitment of TBK1 to IRF3. Phosphorylates IFIH1 on 'Ser-828' interfering with IFIH1 filament assembly on long dsRNA and resulting in attenuated IFIH1-signaling. Can inhibit CASP10 isoform 7-mediated activation of the NF-kappaB signaling pathway. May play a role in the biogenesis of the 40S ribosomal subunit. Involved in the processing of 21S pre-rRNA to the mature 18S rRNA. The polypeptide is Serine/threonine-protein kinase RIO3 (RIOK3) (Homo sapiens (Human)).